The chain runs to 245 residues: Aliphatic sulfonates import ATP-binding protein SsuB 2 (245 aa).

In terms of domain architecture, ABC transporter spans 15-229 (VAVRGLSRAF…DVADPEFARI (215 aa)). Position 47–54 (47–54 (GASGCGKS)) interacts with ATP.

The protein belongs to the ABC transporter superfamily. Aliphatic sulfonates importer (TC 3.A.1.17.2) family. In terms of assembly, the complex is composed of two ATP-binding proteins (SsuB), two transmembrane proteins (SsuC) and a solute-binding protein (SsuA).

It localises to the cell inner membrane. The enzyme catalyses ATP + H2O + aliphatic sulfonate-[sulfonate-binding protein]Side 1 = ADP + phosphate + aliphatic sulfonateSide 2 + [sulfonate-binding protein]Side 1.. Its function is as follows. Part of the ABC transporter complex SsuABC involved in aliphatic sulfonates import. Responsible for energy coupling to the transport system. The protein is Aliphatic sulfonates import ATP-binding protein SsuB 2 of Paracoccus denitrificans (strain Pd 1222).